The primary structure comprises 362 residues: Probable endopolygalacturonase B (362 aa).

Residues 1-20 (MHFLQNAFVAATMGAAPAAA) form the signal peptide. A propeptide spanning residues 21–25 (TPLEK) is cleaved from the precursor. Cys28 and Cys43 are oxidised to a cystine. 6 PbH1 repeats span residues 155–184 (ADHL…DIGQ), 185–206 (STYI…AINS), 207–227 (GEHI…SIGS), 236–257 (VNDV…RIKT), 265–287 (VENV…VVEQ), and 299–344 (TNGV…DVTG). Asp199 serves as the catalytic Proton donor. An intrachain disulfide couples Cys201 to Cys217. His221 is a catalytic residue. An intrachain disulfide couples Cys327 to Cys332. Residue Asn334 is glycosylated (N-linked (GlcNAc...) asparagine). Residues Cys351 and Cys360 are joined by a disulfide bond.

The protein belongs to the glycosyl hydrolase 28 family.

It localises to the secreted. The catalysed reaction is (1,4-alpha-D-galacturonosyl)n+m + H2O = (1,4-alpha-D-galacturonosyl)n + (1,4-alpha-D-galacturonosyl)m.. Involved in maceration and soft-rotting of plant tissue. Hydrolyzes the 1,4-alpha glycosidic bonds of de-esterified pectate in the smooth region of the plant cell wall. This is Probable endopolygalacturonase B (pgaB) from Aspergillus kawachii (White koji mold).